The chain runs to 252 residues: Putative hydro-lyase OB3382 (252 aa).

It belongs to the D-glutamate cyclase family.

In Oceanobacillus iheyensis (strain DSM 14371 / CIP 107618 / JCM 11309 / KCTC 3954 / HTE831), this protein is Putative hydro-lyase OB3382.